The primary structure comprises 67 residues: Alpha-conotoxin G1.5 (67 aa).

The N-terminal stretch at 1 to 21 is a signal peptide; it reads MGMRMMFTVFLLVALATTVVS. Residues 22 to 47 constitute a propeptide that is removed on maturation; the sequence is FTSDRASDRRNAAVKAFDLISSTVKK. 2 disulfide bridges follow: Cys-49/Cys-55 and Cys-50/Cys-63. Gln-65 carries the glutamine amide modification.

This sequence belongs to the conotoxin A superfamily. As to expression, expressed by the venom duct.

It localises to the secreted. Its function is as follows. Alpha-conotoxins act on postsynaptic membranes, they bind to the nicotinic acetylcholine receptors (nAChR) and thus inhibit them. Globular isomer (C1-C3; C2-C4) selectively inhibits neuronal (non-muscle) nAChR subtypes particularly human alpha-3-beta-2/CHRNA3-CHRNB2 (IC(50)=35.7 nM) and alpha-9-alpha-10/CHRNA9-CHRNA10 nAChRs (IC(50)=569 nM), while the ribbon isomer (C1-C4; C2-C3) shows weak inhibition on alpha-3-beta-2/CHRNA3-CHRNB2, but not on all other receptors tested. The chain is Alpha-conotoxin G1.5 from Conus geographus (Geography cone).